We begin with the raw amino-acid sequence, 323 residues long: MSKHYFDPRLKIFSLNSNRPLAEKIADAVGVELGKCSVTQFSDGEIQVNIEESIRGAHVYVIQSTSSPVNDNLMELLIMIDALKRASAKTINVVMPYYGYARQDRKARAREPITAKLVANMIEKAGATRMLTLDLHAVQIQGFFDIPVDHLMGAPLIADYFIEHGIQGDDVVVVSPDHGGVTRARKLAEFLKAPIAIIDKRRPKANVAEVMNIIGHVEGKTCVLIDDMIDTAGTISLAANALKEAGAKDVYASCTHPVLSGPALQRIEDSAIERLVVTDSIYLSDDRKIVKIDEVSVGELIGDAIKRIHENKPVSPLFETKNK.

ATP is bound by residues 43-45 (DGE) and 102-103 (RQ). Mg(2+) contacts are provided by His-136 and Asp-177. Lys-200 is an active-site residue. Residues Arg-202, Asp-226, and 230–234 (DTAGT) contribute to the D-ribose 5-phosphate site.

This sequence belongs to the ribose-phosphate pyrophosphokinase family. Class I subfamily. In terms of assembly, homohexamer. Mg(2+) serves as cofactor.

Its subcellular location is the cytoplasm. It carries out the reaction D-ribose 5-phosphate + ATP = 5-phospho-alpha-D-ribose 1-diphosphate + AMP + H(+). It participates in metabolic intermediate biosynthesis; 5-phospho-alpha-D-ribose 1-diphosphate biosynthesis; 5-phospho-alpha-D-ribose 1-diphosphate from D-ribose 5-phosphate (route I): step 1/1. Its function is as follows. Involved in the biosynthesis of the central metabolite phospho-alpha-D-ribosyl-1-pyrophosphate (PRPP) via the transfer of pyrophosphoryl group from ATP to 1-hydroxyl of ribose-5-phosphate (Rib-5-P). The polypeptide is Ribose-phosphate pyrophosphokinase 2 (Enterococcus faecalis (strain ATCC 700802 / V583)).